The following is a 983-amino-acid chain: Junction-mediating and -regulatory protein (983 aa).

The segment at 1-119 (MSFALEETLE…RSARSLKGDP (119 aa)) is interaction with p300/EP300. A compositionally biased stretch (polar residues) spans 50–61 (TAQRQRSGSREQ). The disordered stretch occupies residues 50 to 167 (TAQRQRSGSR…PVPPAPPVPP (118 aa)). Low complexity predominate over residues 77–94 (AARGRSEAAASATAALRS). 2 positions are modified to phosphoserine: serine 108 and serine 114. Residues 158–167 (PVPPAPPVPP) are compositionally biased toward pro residues. Coiled coils occupy residues 315 to 351 (SELR…ELLD), 480 to 528 (LQMM…QLQL), and 571 to 612 (EAML…AKKA). The interval 469–558 (EKLQYAVSKE…SIKRLISEKR (90 aa)) is interaction with p300/EP300. Serine 704 carries the post-translational modification Phosphoserine. The disordered stretch occupies residues 723-855 (EKTEVGGGGS…IPKSASAPAA (133 aa)). The segment covering 734–761 (LGPSQTAEPQSLVQLEDTSSEQLESTSL) has biased composition (polar residues). Positions 794-818 (PLPPPLPPTPPPPPPPPPPPPPPLP) are enriched in pro residues. The segment covering 831 to 846 (TLEKDALRTEGNERSI) has biased composition (basic and acidic residues). Serine 883 is subject to Phosphoserine. Residues 916-933 (DSNNILAQIRKGVKLKKV) enclose the WH2 domain. Residues 962-983 (IKEASPESEDEEEALPCTDWEN) are disordered. Over residues 967 to 983 (PESEDEEEALPCTDWEN) the composition is skewed to acidic residues. At serine 969 the chain carries Phosphoserine.

Belongs to the JMY family. In terms of assembly, interacts with p300/EP300, the complex activates p53/TP53 transcriptional activity. Interacts with TTC5/STRAP; the interaction takes place in the nucleus and facilitates the association between JMY and p300/EP300. Interacts with TTC5/STRAP; the interaction takes place in the cytoplasm and results in the inhibition of JYM's nucleation activity. Interacts with MAP1LC3B; the interaction results in the activation of JYM's nucleation activity in the cytoplasm. In terms of processing, ubiquitinated by MDM2, leading to its subsequent degradation by the proteasome. In case of DNA damage, the interaction with MDM2 is altered, preventing degradation and allowing interaction with p300/EP300 and its function in p53/TP53 stress response. Widely expressed, except in testis where it is expressed at low level.

It localises to the nucleus. The protein resides in the cytoplasmic vesicle. It is found in the cytoplasm. Its subcellular location is the cytoskeleton. The protein localises to the endomembrane system. It localises to the autophagosome membrane. Its function is as follows. Acts both as a nuclear p53/TP53-cofactor and a cytoplasmic regulator of actin dynamics depending on conditions. In nucleus, acts as a cofactor that increases p53/TP53 response via its interaction with p300/EP300. Increases p53/TP53-dependent transcription and apoptosis, suggesting an important role in p53/TP53 stress response such as DNA damage. In cytoplasm, acts as a nucleation-promoting factor for both branched and unbranched actin filaments. Activates the Arp2/3 complex to induce branched actin filament networks. Also catalyzes actin polymerization in the absence of Arp2/3, creating unbranched filaments. Contributes to cell motility by controlling actin dynamics. May promote the rapid formation of a branched actin network by first nucleating new mother filaments and then activating Arp2/3 to branch off these filaments. Upon nutrient stress, directly recruited by MAP1LC3B to the phagophore membrane surfaces to promote actin assembly during autophagy. The p53/TP53-cofactor and actin activator activities are regulated via its subcellular location. This is Junction-mediating and -regulatory protein (Jmy) from Mus musculus (Mouse).